The sequence spans 486 residues: UDP-GalNAc:beta-1,3-N-acetylgalactosaminyltransferase 2 (486 aa).

The Cytoplasmic portion of the chain corresponds to 1–10; sequence MRHLLFLCPC. Residues 11–31 traverse the membrane as a helical; Signal-anchor for type II membrane protein segment; sequence VIGVAFHLWLFNFSGLFSWFL. At 32–486 the chain is on the lumenal side; that stretch reads VWSPHSYDIV…CGNPCACEDR (455 aa). Residues N103 and N160 are each glycosylated (N-linked (GlcNAc...) asparagine).

This sequence belongs to the glycosyltransferase 31 family.

The protein localises to the golgi apparatus membrane. The protein resides in the endoplasmic reticulum. The enzyme catalyses 3-O-(N-acetyl-beta-D-glucosaminyl-(1-&gt;4)-alpha-D-mannosyl)-L-threonyl-[protein] + UDP-N-acetyl-alpha-D-galactosamine = 3-O-[beta-D-GalNAc-(1-&gt;3)-beta-D-GlcNAc-(1-&gt;4)-alpha-D-Man]-L-Thr-[protein] + UDP + H(+). It participates in protein modification; protein glycosylation. Its function is as follows. Beta-1,3-N-acetylgalactosaminyltransferase that synthesizes a unique carbohydrate structure, GalNAc-beta-1-3GlcNAc, on N- and O-glycans. Has no galactose nor galactosaminyl transferase activity toward any acceptor substrate. Involved in alpha-dystroglycan (dag1) glycosylation. The chain is UDP-GalNAc:beta-1,3-N-acetylgalactosaminyltransferase 2 (b3galnt2) from Xenopus laevis (African clawed frog).